Consider the following 416-residue polypeptide: Peptide chain release factor subunit 1 (416 aa).

It belongs to the eukaryotic release factor 1 family. In terms of assembly, heterodimer of two subunits, one of which binds GTP.

Its subcellular location is the cytoplasm. Directs the termination of nascent peptide synthesis (translation) in response to the termination codons UAA, UAG and UGA. This chain is Peptide chain release factor subunit 1, found in Halobacterium salinarum (strain ATCC 29341 / DSM 671 / R1).